Consider the following 512-residue polypeptide: Sucrose-6-phosphate hydrolase (512 aa).

Residues 40–43 (WMND), Q59, W67, 102–103 (FS), 165–166 (RD), E229, and W311 each bind substrate. D43 is a catalytic residue.

It belongs to the glycosyl hydrolase 32 family.

It localises to the cytoplasm. It catalyses the reaction Hydrolysis of terminal non-reducing beta-D-fructofuranoside residues in beta-D-fructofuranosides.. It functions in the pathway glycan biosynthesis; sucrose metabolism. The chain is Sucrose-6-phosphate hydrolase (sacA) from Zymomonas mobilis subsp. mobilis (strain ATCC 10988 / DSM 424 / LMG 404 / NCIMB 8938 / NRRL B-806 / ZM1).